The chain runs to 622 residues: Wall-associated receptor kinase-like 21 (622 aa).

A signal peptide spans 1 to 21 (MAETPQPYLIFVFFVFTLTVA). Over 22–247 (TQTTGSVKCK…LVYKRKGLHK (226 aa)) the chain is Extracellular. Residues Asn-50, Asn-114, Asn-131, Asn-160, and Asn-195 are each glycosylated (N-linked (GlcNAc...) asparagine). The chain crosses the membrane as a helical span at residues 248-268 (LVVLGTAGILVGVLVIVVLIA). Residues 269–622 (TYFFRNKQSA…MKRQQSFPRE (354 aa)) lie on the Cytoplasmic side of the membrane. Residues 314–594 (FSDKNMLGTG…EITEDLHRIK (281 aa)) enclose the Protein kinase domain. ATP is bound by residues 320–328 (LGTGAYGTV) and Lys-342. The active-site Proton acceptor is Asp-439.

It belongs to the protein kinase superfamily. Ser/Thr protein kinase family.

It is found in the membrane. The catalysed reaction is L-seryl-[protein] + ATP = O-phospho-L-seryl-[protein] + ADP + H(+). It carries out the reaction L-threonyl-[protein] + ATP = O-phospho-L-threonyl-[protein] + ADP + H(+). Serine/threonine-protein kinase that may function as a signaling receptor of extracellular matrix component. In Arabidopsis thaliana (Mouse-ear cress), this protein is Wall-associated receptor kinase-like 21 (WAKL21).